The primary structure comprises 47 residues: PhoP/PhoQ regulator MgrB (47 aa).

The helical transmembrane segment at 6–26 threads the bilayer; sequence WVVLVVVVLACLLLWAQVFNM.

Belongs to the MgrB family. May form homooligomers. Probably interacts with the periplasmic domain of PhoQ.

The protein resides in the cell inner membrane. In terms of biological role, phoP-regulated transcription is redox-sensitive, being activated when the periplasm becomes more reducing. MgrB acts between DsbA/DsbB and PhoP/PhoQ in this pathway. Represses PhoP/PhoQ signaling, possibly by binding to the periplasmic domain of PhoQ, altering its activity and that of downstream effector PhoP. The sequence is that of PhoP/PhoQ regulator MgrB from Escherichia coli O157:H7.